The chain runs to 372 residues: Cobalt-precorrin-5B C(1)-methyltransferase (372 aa).

Belongs to the CbiD family.

It catalyses the reaction Co-precorrin-5B + S-adenosyl-L-methionine = Co-precorrin-6A + S-adenosyl-L-homocysteine. The protein operates within cofactor biosynthesis; adenosylcobalamin biosynthesis; cob(II)yrinate a,c-diamide from sirohydrochlorin (anaerobic route): step 6/10. In terms of biological role, catalyzes the methylation of C-1 in cobalt-precorrin-5B to form cobalt-precorrin-6A. The polypeptide is Cobalt-precorrin-5B C(1)-methyltransferase (Geobacillus kaustophilus (strain HTA426)).